The primary structure comprises 61 residues: UPF0434 protein Pfl01_4174 (61 aa).

The protein belongs to the UPF0434 family.

The polypeptide is UPF0434 protein Pfl01_4174 (Pseudomonas fluorescens (strain Pf0-1)).